The chain runs to 416 residues: 4-hydroxy-3-methylbut-2-en-1-yl diphosphate synthase (flavodoxin) (416 aa).

[4Fe-4S] cluster-binding residues include cysteine 304, cysteine 307, cysteine 350, and glutamate 357.

It belongs to the IspG family. The cofactor is [4Fe-4S] cluster.

It catalyses the reaction (2E)-4-hydroxy-3-methylbut-2-enyl diphosphate + oxidized [flavodoxin] + H2O + 2 H(+) = 2-C-methyl-D-erythritol 2,4-cyclic diphosphate + reduced [flavodoxin]. The protein operates within isoprenoid biosynthesis; isopentenyl diphosphate biosynthesis via DXP pathway; isopentenyl diphosphate from 1-deoxy-D-xylulose 5-phosphate: step 5/6. In terms of biological role, converts 2C-methyl-D-erythritol 2,4-cyclodiphosphate (ME-2,4cPP) into 1-hydroxy-2-methyl-2-(E)-butenyl 4-diphosphate. This is 4-hydroxy-3-methylbut-2-en-1-yl diphosphate synthase (flavodoxin) from Rhizobium johnstonii (strain DSM 114642 / LMG 32736 / 3841) (Rhizobium leguminosarum bv. viciae).